The chain runs to 260 residues: Small ribosomal subunit protein uS2 (260 aa).

The segment at 225–260 (KGQTQTEAAPNAQAAPEAAAPAEQPAEEAAAASSEG) is disordered. Positions 231 to 260 (EAAPNAQAAPEAAAPAEQPAEEAAAASSEG) are enriched in low complexity.

It belongs to the universal ribosomal protein uS2 family.

This Rhodopirellula baltica (strain DSM 10527 / NCIMB 13988 / SH1) protein is Small ribosomal subunit protein uS2.